A 583-amino-acid polypeptide reads, in one-letter code: Aspartate--tRNA ligase (583 aa).

L-aspartate is bound at residue Glu-174. The interval 198–201 (QITK) is aspartate. Arg-220 is an L-aspartate binding site. Residues 220–222 (RDE) and Gln-229 each bind ATP. His-443 contacts L-aspartate. Glu-477 lines the ATP pocket. Arg-484 serves as a coordination point for L-aspartate. 529–532 (GLDR) contacts ATP.

The protein belongs to the class-II aminoacyl-tRNA synthetase family. Type 1 subfamily. As to quaternary structure, homodimer.

Its subcellular location is the cytoplasm. The enzyme catalyses tRNA(Asp) + L-aspartate + ATP = L-aspartyl-tRNA(Asp) + AMP + diphosphate. In terms of biological role, catalyzes the attachment of L-aspartate to tRNA(Asp) in a two-step reaction: L-aspartate is first activated by ATP to form Asp-AMP and then transferred to the acceptor end of tRNA(Asp). The chain is Aspartate--tRNA ligase from Streptococcus agalactiae serotype III (strain NEM316).